The sequence spans 388 residues: L-lactate dehydrogenase (388 aa).

In terms of domain architecture, FMN hydroxy acid dehydrogenase spans 1 to 380; sequence MIISAASDYR…SADALSRVTR (380 aa). Substrate is bound at residue Y24. FMN is bound by residues S106 and Q127. Y129 is a binding site for substrate. Position 155 (T155) interacts with FMN. R164 is a substrate binding site. K251 provides a ligand contact to FMN. The Proton acceptor role is filled by H275. Position 278 (R278) interacts with substrate. 306–330 contributes to the FMN binding site; the sequence is DSGIRSGLDVVRMLALGADAVLLGR.

The protein belongs to the FMN-dependent alpha-hydroxy acid dehydrogenase family. It depends on FMN as a cofactor.

It localises to the cell inner membrane. It catalyses the reaction (S)-lactate + A = pyruvate + AH2. Its function is as follows. Catalyzes the conversion of L-lactate to pyruvate. Is coupled to the respiratory chain. In Xanthomonas oryzae pv. oryzae (strain MAFF 311018), this protein is L-lactate dehydrogenase.